A 386-amino-acid chain; its full sequence is Succinate--CoA ligase [ADP-forming] subunit beta (386 aa).

The ATP-grasp domain maps to 9 to 244; it reads KEILKQYGVK…LDEEDEKEIE (236 aa). ATP contacts are provided by residues Lys-46, 53–55, Glu-99, Cys-102, and Glu-107; that span reads GRG. Mg(2+) is bound by residues Asn-199 and Asp-213. Substrate-binding positions include Asn-264 and 321–323; that span reads GIM.

This sequence belongs to the succinate/malate CoA ligase beta subunit family. In terms of assembly, heterotetramer of two alpha and two beta subunits. It depends on Mg(2+) as a cofactor.

The enzyme catalyses succinate + ATP + CoA = succinyl-CoA + ADP + phosphate. It carries out the reaction GTP + succinate + CoA = succinyl-CoA + GDP + phosphate. Its pathway is carbohydrate metabolism; tricarboxylic acid cycle; succinate from succinyl-CoA (ligase route): step 1/1. Functionally, succinyl-CoA synthetase functions in the citric acid cycle (TCA), coupling the hydrolysis of succinyl-CoA to the synthesis of either ATP or GTP and thus represents the only step of substrate-level phosphorylation in the TCA. The beta subunit provides nucleotide specificity of the enzyme and binds the substrate succinate, while the binding sites for coenzyme A and phosphate are found in the alpha subunit. In Brevibacillus brevis (strain 47 / JCM 6285 / NBRC 100599), this protein is Succinate--CoA ligase [ADP-forming] subunit beta.